The following is a 56-amino-acid chain: Small ribosomal subunit protein uS14 (56 aa).

Residues C21, C24, C39, and C42 each contribute to the Zn(2+) site.

This sequence belongs to the universal ribosomal protein uS14 family. Zinc-binding uS14 subfamily. Part of the 30S ribosomal subunit. Zn(2+) is required as a cofactor.

Binds 16S rRNA, required for the assembly of 30S particles. The protein is Small ribosomal subunit protein uS14 of Methanospirillum hungatei JF-1 (strain ATCC 27890 / DSM 864 / NBRC 100397 / JF-1).